The chain runs to 102 residues: Spexin prohormone 1 (102 aa).

The first 26 residues, 1 to 26, serve as a signal peptide directing secretion; sequence MKDLRTLAAYALALLLLATFVSYSRS. Positions 27-35 are excised as a propeptide; it reads APMGSFQRR. The residue at position 49 (Q49) is a Glutamine amide. Residues 50–102 constitute a propeptide that is removed on maturation; that stretch reads GRRFVSEDRNEGDLYDTIRLESQSQNTENLSISKAAAFLLNVLQQARDEGEPY.

This sequence belongs to the spexin family. Expressed in the anterior hypothalamus, ventromedial thalamic nucleus and medial longitudinal fasciculus of the brain (at protein level). Widely expressed. Expressed predominantly in the spleen, kidney, liver and testis. Expressed in olfactory bulb, pituitary, telencephalon, diencephalons, spinal cord, optic tectum, cerebellum and hypothalamus of the brain.

It localises to the secreted. It is found in the extracellular space. The protein resides in the cytoplasmic vesicle. Its subcellular location is the secretory vesicle. In terms of biological role, plays a role in the regulation of food intake and body weight and in reproduction. May also play a role as a central modulator of cardiovascular and renal function and nociception. Its function is as follows. Brain administration of the peptide inhibits food consumption. May function as a satiety factor for feeding control. Involved in the negative regulation of the reproductive axis by inhibiting luteinizing hormone secretion from pituitary cells. The protein is Spexin prohormone 1 (spx) of Carassius auratus (Goldfish).